Here is a 314-residue protein sequence, read N- to C-terminus: Glyceraldehyde-3-phosphate dehydrogenase A, chloroplastic (314 aa).

NADP(+)-binding positions include 5–6, Asp-29, and Arg-74; that span reads RI. Cysteines 13 and 283 form a disulfide. D-glyceraldehyde 3-phosphate is bound by residues 147 to 149, Thr-178, Arg-193, 206 to 207, and Arg-229; these read SCT and TG. Cys-148 (nucleophile) is an active-site residue. Position 311 (Asn-311) interacts with NADP(+).

Belongs to the glyceraldehyde-3-phosphate dehydrogenase family. In terms of assembly, homotetramer.

The protein resides in the plastid. Its subcellular location is the chloroplast. It carries out the reaction D-glyceraldehyde 3-phosphate + phosphate + NADP(+) = (2R)-3-phospho-glyceroyl phosphate + NADPH + H(+). It participates in carbohydrate biosynthesis; Calvin cycle. This Scenedesmus vacuolatus (Green alga) protein is Glyceraldehyde-3-phosphate dehydrogenase A, chloroplastic (GapA).